Consider the following 431-residue polypeptide: Trigger factor (431 aa).

The 86-residue stretch at Gly158–Pro243 folds into the PPIase FKBP-type domain.

The protein belongs to the FKBP-type PPIase family. Tig subfamily.

The protein localises to the cytoplasm. It catalyses the reaction [protein]-peptidylproline (omega=180) = [protein]-peptidylproline (omega=0). In terms of biological role, involved in protein export. Acts as a chaperone by maintaining the newly synthesized protein in an open conformation. Functions as a peptidyl-prolyl cis-trans isomerase. This chain is Trigger factor, found in Stenotrophomonas maltophilia (strain K279a).